A 330-amino-acid chain; its full sequence is 1,8-cineole synthase (330 aa).

Aspartate 81 serves as a coordination point for Mg(2+). The DDXXD motif motif lies at 81–85 (DDHFD). Arginine 174 is a substrate binding site. Residues asparagine 220 and serine 224 each coordinate Mg(2+). Positions 220–228 (NDVLSLEKE) match the NXXXSXXXE motif motif. Lysine 227 is a substrate binding site. Glutamate 228 is a binding site for Mg(2+). 314 to 315 (RY) provides a ligand contact to substrate.

It belongs to the terpene synthase family. As to quaternary structure, homodimer. The cofactor is Mg(2+).

It carries out the reaction (2E)-geranyl diphosphate + H2O = 1,8-cineole + diphosphate. It catalyses the reaction neryl diphosphate + H2O = 1,8-cineole + diphosphate. Its function is as follows. In vitro, catalyzes the formation of 1,8-cineole from geranyl diphosphate (GPP). Can also accept neryl diphosphate (NPP) as substrate to produce 1,8-cineole. The sequence is that of 1,8-cineole synthase from Streptomyces clavuligerus.